The primary structure comprises 120 residues: Cytochrome c-550 (120 aa).

Residues 5–25 (PLIPFLLIAVLGIGLTFFLSV) form a helical membrane-spanning segment. At 26–120 (KGLDDSREIA…DMAEWVSKIK (95 aa)) the chain is on the periplasmic side. Positions 60, 63, 64, and 99 each coordinate heme c.

In terms of processing, binds 1 heme c group covalently per subunit.

Its subcellular location is the cell membrane. In terms of biological role, not essential for growth on minimal or rich media. This chain is Cytochrome c-550 (cccA), found in Bacillus subtilis (strain 168).